Consider the following 212-residue polypeptide: Peptide methionine sulfoxide reductase MsrA (212 aa).

C52 is a catalytic residue.

This sequence belongs to the MsrA Met sulfoxide reductase family.

The enzyme catalyses L-methionyl-[protein] + [thioredoxin]-disulfide + H2O = L-methionyl-(S)-S-oxide-[protein] + [thioredoxin]-dithiol. It catalyses the reaction [thioredoxin]-disulfide + L-methionine + H2O = L-methionine (S)-S-oxide + [thioredoxin]-dithiol. Its function is as follows. Has an important function as a repair enzyme for proteins that have been inactivated by oxidation. Catalyzes the reversible oxidation-reduction of methionine sulfoxide in proteins to methionine. The chain is Peptide methionine sulfoxide reductase MsrA from Escherichia coli O17:K52:H18 (strain UMN026 / ExPEC).